Reading from the N-terminus, the 3619-residue chain is BEACH domain-containing protein lvsA (3619 aa).

7 disordered regions span residues 1-117 (MFRR…NNNN), 648-709 (KIDD…EKEA), 1101-1129 (NNNN…NNDQ), 1367-1390 (SPNL…NSKK), 1636-1658 (IPTP…RKSI), 1893-1924 (SSIS…PTSG), and 1964-1999 (QQAA…NTPN). A compositionally biased stretch (pro residues) spans 17 to 30 (PQVPHSPGHPPHQP). Composition is skewed to low complexity over residues 31–59 (PQQQ…QQPQ), 68–87 (SVSS…SFSS), 97–117 (EESS…NNNN), 656–689 (NNNN…NEEN), 1101–1127 (NNNN…NNNN), 1375–1387 (NNNN…GGSN), 1640–1652 (SSSS…SSTS), and 1893–1923 (SSIS…TPTS). A WD 1 repeat occupies 94–133 (SATEESSSINSNNNNNNNKNNNNNNNSNIIESNINVWTIM). A compositionally biased stretch (polar residues) spans 1974–1986 (MSIQSSPFQSKNL). Positions 2234 to 2258 (VKILEKLEADRVGLQKTVQSLYKSL) form a coiled coil. The stretch at 2294–2335 (LDSDFMNAFCYPLYKLVISDQHEHVDNSIKLWRLLLSLKTSS) is one WD 2 repeat. Disordered regions lie at residues 2403-2457 (KKQH…ITKK) and 2596-2785 (NTSS…SEDE). A compositionally biased stretch (basic and acidic residues) spans 2440-2452 (DRKDQSHQEEKSK). Low complexity predominate over residues 2596–2662 (NTSSITNNNN…TTTPQQSSSQ (67 aa)). Polar residues-rich tracts occupy residues 2663 to 2687 (IKVS…SSSE) and 2694 to 2725 (KLQS…SEEN). Composition is skewed to low complexity over residues 2726–2735 (SSLTSASTTL) and 2742–2764 (TQTT…TTTT). Residues 2807–2932 (KDPRLNGIMY…TRDEVYHTLV (126 aa)) enclose the BEACH-type PH domain. A disordered region spans residues 2940–2971 (TIGGDAQGITGGQTGNDDNDDHHGGGGGRGVR). A compositionally biased stretch (gly residues) spans 2944–2953 (DAQGITGGQT). The span at 2959–2971 (DDHHGGGGGRGVR) shows a compositional bias: basic and acidic residues. Residues 2972-3270 (DRFTSIWRKS…QLFDKPHPKR (299 aa)) enclose the BEACH domain. WD repeat units follow at residues 3347–3386 (HHDG…LAKR), 3389–3428 (GHTG…YVRS), 3431–3471 (AHEG…NYKT), 3474–3518 (IAND…LPDN), and 3563–3602 (SHST…QVKQ). A disordered region spans residues 3516 to 3539 (PDNNNSNNNNNNNNNNNNNATQIP). Positions 3518-3534 (NNNSNNNNNNNNNNNNN) are enriched in low complexity.

It localises to the contractile vacuole membrane. Functionally, involved in myosin-independent cytokinesis and early steps of phagocytosis. Also involved in contractile vacuole-mediated osmoregulation. The polypeptide is BEACH domain-containing protein lvsA (lvsA) (Dictyostelium discoideum (Social amoeba)).